Consider the following 604-residue polypeptide: Sulfite reductase [NADPH] flavoprotein alpha-component (604 aa).

The Flavodoxin-like domain maps to 65–203; it reads VTILYGSQTG…AAGQWHADVL (139 aa). Residues 71–76, 118–121, and 154–163 contribute to the FMN site; these read SQTGNG, STHG, and LGDSSYEFFC. Residues 236–453 form the FAD-binding FR-type domain; that stretch reads QNPYSAEVLV…VEPNKHFRLP (218 aa). FAD is bound by residues Thr324, Leu358, 392-395, 410-412, and 425-428; these read RLYS, TVA, and GGAS. Residues 524–525, 530–534, and Asp566 contribute to the NADP(+) site; these read SR and KIYVQ. Tyr604 is a binding site for FAD.

This sequence belongs to the NADPH-dependent sulphite reductase flavoprotein subunit CysJ family. The protein in the N-terminal section; belongs to the flavodoxin family. It in the C-terminal section; belongs to the flavoprotein pyridine nucleotide cytochrome reductase family. In terms of assembly, alpha(8)-beta(8). The alpha component is a flavoprotein, the beta component is a hemoprotein. FAD serves as cofactor. FMN is required as a cofactor.

The catalysed reaction is hydrogen sulfide + 3 NADP(+) + 3 H2O = sulfite + 3 NADPH + 4 H(+). Its pathway is sulfur metabolism; hydrogen sulfide biosynthesis; hydrogen sulfide from sulfite (NADPH route): step 1/1. Its function is as follows. Component of the sulfite reductase complex that catalyzes the 6-electron reduction of sulfite to sulfide. This is one of several activities required for the biosynthesis of L-cysteine from sulfate. The flavoprotein component catalyzes the electron flow from NADPH -&gt; FAD -&gt; FMN to the hemoprotein component. This Shewanella sp. (strain MR-7) protein is Sulfite reductase [NADPH] flavoprotein alpha-component.